An 890-amino-acid chain; its full sequence is MTDVTIKTLAAERQTSVERLVQQFADAGIRKSADDSVSAQEKQTLIDHLNQKNSGPDKLTLQRKTRSTLNIPGTGGKSKSVQIEVRKKRTFVKRDPQEAERLAAEEQAQREAEEQARREAEESAKREAQQKAEREAAEQAKREAAEQAKREAAEKDKVSNQQDDMTKNAQAEKARREQEAAELKRKAEEEARRKLEEEARRVAEEARRMAEENKWTDNAEPTEDSSDYHVTTSQHARQAEDESDREVEGGRGRGRNAKAARPKKGNKHAESKADREEARAAVRGGKGGKRKGSSLQQGFQKPAQAVNRDVVIGETITVGELANKMAVKGSQVIKAMMKLGAMATINQVIDQETAQLVAEEMGHKVILRRENELEEAVMSDRDTGAAAEPRAPVVTIMGHVDHGKTSLLDYIRSTKVASGEAGGITQHIGAYHVETENGMITFLDTPGHAAFTSMRARGAQATDIVVLVVAADDGVMPQTIEAIQHAKAAQVPVVVAVNKIDKPEADPDRVKNELSQYGILPEEWGGESQFVHVSAKAGTGIDELLDAILLQAEVLELKAVRKGMASGAVIESFLDKGRGPVATVLVREGTLHKGDIVLCGFEYGRVRAMRNELGQEVLEAGPSIPVEILGLSGVPAAGDEVTVVRDEKKAREVALYRQGKFREVKLARQQKSKLENMFANMTEGEVHEVNIVLKADVQGSVEAISDSLLKLSTDEVKVKIIGSGVGGITETDATLAAASNAILVGFNVRADASARKVIEAESLDLRYYSVIYNLIDEVKAAMSGMLSPELKQQIIGLAEVRDVFKSPKFGAIAGCMVTEGVVKRHNPIRVLRDNVVIYEGELESLRRFKDDVNEVRNGMECGIGVKNYNDVRTGDVIEVFEIIEIQRTIA.

A disordered region spans residues 45-304; the sequence is LIDHLNQKNS…LQQGFQKPAQ (260 aa). Residues 67 to 81 are compositionally biased toward polar residues; the sequence is STLNIPGTGGKSKSV. Positions 92–217 are enriched in basic and acidic residues; it reads VKRDPQEAER…RMAEENKWTD (126 aa). The span at 252-266 shows a compositional bias: basic residues; it reads GRGRNAKAARPKKGN. The span at 267–280 shows a compositional bias: basic and acidic residues; the sequence is KHAESKADREEARA. The tr-type G domain occupies 389–558; it reads PRAPVVTIMG…LLQAEVLELK (170 aa). The interval 398–405 is G1; the sequence is GHVDHGKT. 398–405 is a GTP binding site; sequence GHVDHGKT. The segment at 423 to 427 is G2; sequence GITQH. Residues 444–447 form a G3 region; the sequence is DTPG. GTP is bound by residues 444–448 and 498–501; these read DTPGH and NKID. The tract at residues 498–501 is G4; it reads NKID. The interval 534 to 536 is G5; the sequence is SAK. Position 808 is an N6-acetyllysine (Lys808).

Belongs to the TRAFAC class translation factor GTPase superfamily. Classic translation factor GTPase family. IF-2 subfamily.

Its subcellular location is the cytoplasm. One of the essential components for the initiation of protein synthesis. Protects formylmethionyl-tRNA from spontaneous hydrolysis and promotes its binding to the 30S ribosomal subunits. Also involved in the hydrolysis of GTP during the formation of the 70S ribosomal complex. This Escherichia coli (strain 55989 / EAEC) protein is Translation initiation factor IF-2.